A 363-amino-acid chain; its full sequence is G kinase-anchoring protein 1-B (363 aa).

Disordered stretches follow at residues 17–79 (ALLK…RNLA) and 147–182 (VNGDGVNGVPQSKKVNKKDKRKNNQGKDKPLTVPLK). The stretch at 50-79 (KTNVNEKKKEKRRKKKEQQQSEANELRNLA) forms a coiled coil. A compositionally biased stretch (basic residues) spans 160 to 170 (KVNKKDKRKNN). 2 coiled-coil regions span residues 249–298 (DGKT…QEGE) and 328–348 (AALEQERSKVKVLQAEQVRYQ).

This sequence belongs to the GKAP1 family.

It localises to the golgi apparatus. Functionally, may play a role in the regulation of insulin-dependent IRS1 tyrosine phosphorylation in adipocytes. This is G kinase-anchoring protein 1-B (gkap1-b) from Xenopus laevis (African clawed frog).